Here is a 171-residue protein sequence, read N- to C-terminus: ATP synthase subunit b (171 aa).

Residues 31–51 (FFVVLAIFLVVLAVIGTFVVP) traverse the membrane as a helical segment.

Belongs to the ATPase B chain family. F-type ATPases have 2 components, F(1) - the catalytic core - and F(0) - the membrane proton channel. F(1) has five subunits: alpha(3), beta(3), gamma(1), delta(1), epsilon(1). F(0) has three main subunits: a(1), b(2) and c(10-14). The alpha and beta chains form an alternating ring which encloses part of the gamma chain. F(1) is attached to F(0) by a central stalk formed by the gamma and epsilon chains, while a peripheral stalk is formed by the delta and b chains.

The protein localises to the cell membrane. Functionally, f(1)F(0) ATP synthase produces ATP from ADP in the presence of a proton or sodium gradient. F-type ATPases consist of two structural domains, F(1) containing the extramembraneous catalytic core and F(0) containing the membrane proton channel, linked together by a central stalk and a peripheral stalk. During catalysis, ATP synthesis in the catalytic domain of F(1) is coupled via a rotary mechanism of the central stalk subunits to proton translocation. Its function is as follows. Component of the F(0) channel, it forms part of the peripheral stalk, linking F(1) to F(0). In Mycobacterium bovis (strain ATCC BAA-935 / AF2122/97), this protein is ATP synthase subunit b.